The primary structure comprises 130 residues: Small ribosomal subunit protein uS11c (130 aa).

This sequence belongs to the universal ribosomal protein uS11 family. In terms of assembly, part of the 30S ribosomal subunit.

The protein localises to the plastid. The protein resides in the chloroplast. In Psilotum nudum (Whisk fern), this protein is Small ribosomal subunit protein uS11c.